The primary structure comprises 247 residues: Caffeoyl-CoA O-methyltransferase (247 aa).

Residue Lys21 participates in substrate binding. Residues Thr63, Glu85, 87–88, Ser93, Asp111, and Ala140 each bind S-adenosyl-L-methionine; that span reads GV. A substrate-binding site is contributed by Asp163. A divalent metal cation is bound at residue Asp163. Asp165 is a binding site for S-adenosyl-L-methionine. 2 residues coordinate a divalent metal cation: Asp189 and Asn190. Asn194 is a substrate binding site.

Belongs to the class I-like SAM-binding methyltransferase superfamily. Cation-dependent O-methyltransferase family. CCoAMT subfamily. Requires a divalent metal cation as cofactor.

It carries out the reaction (E)-caffeoyl-CoA + S-adenosyl-L-methionine = (E)-feruloyl-CoA + S-adenosyl-L-homocysteine + H(+). The protein operates within aromatic compound metabolism; phenylpropanoid biosynthesis. Methylates caffeoyl-CoA to feruloyl-CoA and 5-hydroxyferuloyl-CoA to sinapoyl-CoA. Plays a role in the synthesis of feruloylated polysaccharides. Involved in the reinforcement of the plant cell wall. Also involved in the responding to wounding or pathogen challenge by the increased formation of cell wall-bound ferulic acid polymers. This Populus tremuloides (Quaking aspen) protein is Caffeoyl-CoA O-methyltransferase.